The following is a 353-amino-acid chain: tRNA-specific 2-thiouridylase MnmA (353 aa).

Residues 7-14 and L33 each bind ATP; that span reads GLSGGVDS. The active-site Nucleophile is C94. A disulfide bridge connects residues C94 and C193. G119 contacts ATP. The tract at residues 143–145 is interaction with tRNA; it reads KDQ. Residue C193 is the Cysteine persulfide intermediate of the active site. The segment at 298–299 is interaction with tRNA; it reads RY.

This sequence belongs to the MnmA/TRMU family.

The protein localises to the cytoplasm. It catalyses the reaction S-sulfanyl-L-cysteinyl-[protein] + uridine(34) in tRNA + AH2 + ATP = 2-thiouridine(34) in tRNA + L-cysteinyl-[protein] + A + AMP + diphosphate + H(+). Functionally, catalyzes the 2-thiolation of uridine at the wobble position (U34) of tRNA, leading to the formation of s(2)U34. The protein is tRNA-specific 2-thiouridylase MnmA of Picosynechococcus sp. (strain ATCC 27264 / PCC 7002 / PR-6) (Agmenellum quadruplicatum).